The following is a 216-amino-acid chain: Lipoprotein signal peptidase (216 aa).

Residues 1 to 21 (MATSRTAPTRAPSLRSSPALE) form a disordered region. 3 helical membrane passes run 31–51 (VGAL…DQIT), 89–109 (GSTW…IWYA), and 114–134 (STAW…NLTD). Residues Asp-149 and Asp-164 contribute to the active site. The helical transmembrane segment at 159–179 (IFNLADVAIVFSMGLFLLLTL) threads the bilayer. The interval 189–216 (QRDEGAGVSSASPAGDESAADKPENLSA) is disordered. Positions 207 to 216 (AADKPENLSA) are enriched in basic and acidic residues.

This sequence belongs to the peptidase A8 family.

Its subcellular location is the cell membrane. The catalysed reaction is Release of signal peptides from bacterial membrane prolipoproteins. Hydrolyzes -Xaa-Yaa-Zaa-|-(S,diacylglyceryl)Cys-, in which Xaa is hydrophobic (preferably Leu), and Yaa (Ala or Ser) and Zaa (Gly or Ala) have small, neutral side chains.. It participates in protein modification; lipoprotein biosynthesis (signal peptide cleavage). This protein specifically catalyzes the removal of signal peptides from prolipoproteins. The polypeptide is Lipoprotein signal peptidase (Leifsonia xyli subsp. xyli (strain CTCB07)).